The following is a 298-amino-acid chain: Methylsterol monooxygenase 1-1 (298 aa).

Helical transmembrane passes span 42-62 (ILFL…VELA), 96-116 (FILV…MIEI), and 118-138 (SGLP…YFLI). The Fatty acid hydroxylase domain maps to 132–267 (LVVYFLIEDY…FTYCDYIYGT (136 aa)). A Histidine box-1 motif is present at residues 147-151 (HRFFH). The Histidine box-2 motif lies at 160-164 (HRVHH). The helical transmembrane segment at 189–209 (TFMGPAIAPGHMITFWLWIAL) threads the bilayer. The Histidine box-3 motif lies at 239–245 (YHDYHHY).

The protein belongs to the sterol desaturase family. Interacts with ACBP1. Fe cation serves as cofactor. In terms of tissue distribution, expressed in rosettes, stems, roots, floral buds, flowers and siliques.

Its subcellular location is the endoplasmic reticulum membrane. The enzyme catalyses 4,4-dimethyl-5alpha-cholest-7-en-3beta-ol + 6 Fe(II)-[cytochrome b5] + 3 O2 + 5 H(+) = 4alpha-carboxy-4beta-methyl-5alpha-cholest-7-ene-3beta-ol + 6 Fe(III)-[cytochrome b5] + 4 H2O. It carries out the reaction 24-methylenecycloartanol + 6 Fe(II)-[cytochrome b5] + 3 O2 + 5 H(+) = 4alpha-carboxy-4beta,14alpha-dimethyl-9beta,19-cyclo-5alpha-ergost-24(24(1))-en-3beta-ol + 6 Fe(III)-[cytochrome b5] + 4 H2O. Its function is as follows. Non-heme iron oxygenase involved in sterols biosynthesis by catalyzing the removal of the first methyl group at the C-4 position. 4,4-dimethyl-9-beta,19-cyclopropylsterols such as 24-methylenecycloartanol are the preferred substrates. Acts as a rate-limiting enzyme in the sterol pathway via interaction with ACBP1; sterols serve as lipid modulators for gene expression of homeodomain-leucine zipper IV transcription factors. Together with SMO1-2, involved in the maintenance of sterol composition to balance auxin and cytokinin activities during embryogenesis. This is Methylsterol monooxygenase 1-1 from Arabidopsis thaliana (Mouse-ear cress).